The primary structure comprises 184 residues: Dual-action ribosomal maturation protein DarP (184 aa).

Residues 1-27 (MSIPDTEIPVDDDGYDENGYDRPSKSQ) are disordered. Residues 8–18 (IPVDDDGYDEN) show a composition bias toward acidic residues.

It belongs to the DarP family.

The protein resides in the cytoplasm. Functionally, member of a network of 50S ribosomal subunit biogenesis factors which assembles along the 30S-50S interface, preventing incorrect 23S rRNA structures from forming. Promotes peptidyl transferase center (PTC) maturation. The protein is Dual-action ribosomal maturation protein DarP of Bordetella avium (strain 197N).